Reading from the N-terminus, the 678-residue chain is THO complex subunit 5 homolog B (678 aa).

Disordered regions lie at residues 1–37 and 294–329; these read MSSD…EEAE and ALFK…VQLD. A Nuclear localization signal motif is present at residues 7 to 10; that stretch reads KKRK. The span at 14-37 shows a compositional bias: basic and acidic residues; the sequence is NRSEDGKRGRHDEQEGRYYSEEAE. The segment covering 301–314 has biased composition (acidic residues); that stretch reads DSQDDESDSDAEEE.

The protein belongs to the THOC5 family. As to quaternary structure, component of the THO subcomplex, which is composed of thoc1, thoc2, thoc3, thoc5, thoc6 and thoc7. Component of the transcription/export (TREX) complex at least composed of alyref/thoc4, ddx39b, sarnp/cip29, chtop and the THO subcomplex. Interacts with thoc7.

The protein localises to the nucleus. The protein resides in the nucleus speckle. It is found in the cytoplasm. Component of the THO subcomplex of the TREX complex which is thought to couple mRNA transcription, processing and nuclear export, and which specifically associates with spliced mRNA and not with unspliced pre-mRNA. Plays a key structural role in the oligomerization of the THO-ddx39b complex. TREX is recruited to spliced mRNAs by a transcription-independent mechanism, binds to mRNA upstream of the exon-junction complex (EJC) and is recruited in a splicing- and cap-dependent manner to a region near the 5' end of the mRNA where it functions in mRNA export to the cytoplasm via the TAP/NXF1 pathway. May be involved in cell differentiation. The chain is THO complex subunit 5 homolog B (thoc5-b) from Xenopus laevis (African clawed frog).